The sequence spans 457 residues: Siroheme synthase (457 aa).

The interval 1–204 is precorrin-2 dehydrogenase /sirohydrochlorin ferrochelatase; the sequence is MDHLPIFCQL…ADAKAVSEIT (204 aa). Residues 22-23 and 43-44 each bind NAD(+); these read DV and LA. At serine 128 the chain carries Phosphoserine. Residues 216-457 are uroporphyrinogen-III C-methyltransferase; the sequence is GEVVLVGAGP…RDKLNWFSNH (242 aa). Proline 225 is an S-adenosyl-L-methionine binding site. The active-site Proton acceptor is aspartate 248. Lysine 270 (proton donor) is an active-site residue. S-adenosyl-L-methionine contacts are provided by residues 301-303, isoleucine 306, 331-332, methionine 382, and glycine 411; these read GGD and TA.

The protein in the N-terminal section; belongs to the precorrin-2 dehydrogenase / sirohydrochlorin ferrochelatase family. It in the C-terminal section; belongs to the precorrin methyltransferase family.

The enzyme catalyses uroporphyrinogen III + 2 S-adenosyl-L-methionine = precorrin-2 + 2 S-adenosyl-L-homocysteine + H(+). It catalyses the reaction precorrin-2 + NAD(+) = sirohydrochlorin + NADH + 2 H(+). It carries out the reaction siroheme + 2 H(+) = sirohydrochlorin + Fe(2+). The protein operates within cofactor biosynthesis; adenosylcobalamin biosynthesis; precorrin-2 from uroporphyrinogen III: step 1/1. It functions in the pathway cofactor biosynthesis; adenosylcobalamin biosynthesis; sirohydrochlorin from precorrin-2: step 1/1. It participates in porphyrin-containing compound metabolism; siroheme biosynthesis; precorrin-2 from uroporphyrinogen III: step 1/1. Its pathway is porphyrin-containing compound metabolism; siroheme biosynthesis; siroheme from sirohydrochlorin: step 1/1. The protein operates within porphyrin-containing compound metabolism; siroheme biosynthesis; sirohydrochlorin from precorrin-2: step 1/1. Its function is as follows. Multifunctional enzyme that catalyzes the SAM-dependent methylations of uroporphyrinogen III at position C-2 and C-7 to form precorrin-2 via precorrin-1. Then it catalyzes the NAD-dependent ring dehydrogenation of precorrin-2 to yield sirohydrochlorin. Finally, it catalyzes the ferrochelation of sirohydrochlorin to yield siroheme. The polypeptide is Siroheme synthase (Citrobacter koseri (strain ATCC BAA-895 / CDC 4225-83 / SGSC4696)).